The primary structure comprises 749 residues: Pectate disaccharide-lyase (749 aa).

The signal sequence occupies residues 1–26 (MKYAASGLLSVALNSLLLLGSNQRFA). Residues Asp-538, Asp-562, Asp-563, and Asp-566 each contribute to the Ca(2+) site. Lys-595 functions as the Proton acceptor in the catalytic mechanism.

This sequence belongs to the polysaccharide lyase 9 family. Ca(2+) is required as a cofactor.

It is found in the secreted. The catalysed reaction is [(1-&gt;4)-alpha-D-galacturonosyl](n) = 4-(4-deoxy-alpha-D-galact-4-enuronosyl)-D-galacturonate + [(1-&gt;4)-alpha-D-galacturonosyl](n-2). Activity on pectate is nearly completely inhibited by ethyleneglycol-bis-(P-aminoethyl ether) N,N'-tetraacetic acid (EGTA), EDTA or nitrilotriacetic acid. Activity is specifically restored by the addition of Ca(2+). In terms of biological role, exo-cleaving lyase that catalyzes the digestion of pectate. Contributes to pectate catabolism but not to bacterial virulence. In vitro can also use citrus pectin and highly methyl-esterified Link pectin as substrates. The chain is Pectate disaccharide-lyase from Dickeya chrysanthemi (Pectobacterium chrysanthemi).